The following is a 613-amino-acid chain: DNA mismatch repair protein MutL (613 aa).

Belongs to the DNA mismatch repair MutL/HexB family.

Its function is as follows. This protein is involved in the repair of mismatches in DNA. It is required for dam-dependent methyl-directed DNA mismatch repair. May act as a 'molecular matchmaker', a protein that promotes the formation of a stable complex between two or more DNA-binding proteins in an ATP-dependent manner without itself being part of a final effector complex. This chain is DNA mismatch repair protein MutL, found in Flavobacterium psychrophilum (strain ATCC 49511 / DSM 21280 / CIP 103535 / JIP02/86).